A 134-amino-acid chain; its full sequence is Holo-[acyl-carrier-protein] synthase (134 aa).

2 residues coordinate Mg(2+): Asp-8 and Glu-58.

It belongs to the P-Pant transferase superfamily. AcpS family. The cofactor is Mg(2+).

The protein localises to the cytoplasm. It carries out the reaction apo-[ACP] + CoA = holo-[ACP] + adenosine 3',5'-bisphosphate + H(+). Its function is as follows. Transfers the 4'-phosphopantetheine moiety from coenzyme A to a Ser of acyl-carrier-protein. The protein is Holo-[acyl-carrier-protein] synthase of Ruminiclostridium cellulolyticum (strain ATCC 35319 / DSM 5812 / JCM 6584 / H10) (Clostridium cellulolyticum).